Here is a 166-residue protein sequence, read N- to C-terminus: Large ribosomal subunit protein uL10 (166 aa).

The protein belongs to the universal ribosomal protein uL10 family. In terms of assembly, part of the ribosomal stalk of the 50S ribosomal subunit. The N-terminus interacts with L11 and the large rRNA to form the base of the stalk. The C-terminus forms an elongated spine to which L12 dimers bind in a sequential fashion forming a multimeric L10(L12)X complex.

Its function is as follows. Forms part of the ribosomal stalk, playing a central role in the interaction of the ribosome with GTP-bound translation factors. This chain is Large ribosomal subunit protein uL10, found in Pseudomonas fluorescens (strain Pf0-1).